Reading from the N-terminus, the 261-residue chain is Pantothenate synthetase (261 aa).

29 to 36 (MGALHNGH) contributes to the ATP binding site. His36 (proton donor) is an active-site residue. A (R)-pantoate-binding site is contributed by Gln60. Residue Gln60 participates in beta-alanine binding. ATP is bound at residue 147–150 (GEKD). Gln153 serves as a coordination point for (R)-pantoate. 184-187 (LSSR) lines the ATP pocket.

This sequence belongs to the pantothenate synthetase family. In terms of assembly, homodimer.

The protein localises to the cytoplasm. It catalyses the reaction (R)-pantoate + beta-alanine + ATP = (R)-pantothenate + AMP + diphosphate + H(+). The protein operates within cofactor biosynthesis; (R)-pantothenate biosynthesis; (R)-pantothenate from (R)-pantoate and beta-alanine: step 1/1. In terms of biological role, catalyzes the condensation of pantoate with beta-alanine in an ATP-dependent reaction via a pantoyl-adenylate intermediate. This is Pantothenate synthetase from Francisella tularensis subsp. holarctica (strain FTNF002-00 / FTA).